We begin with the raw amino-acid sequence, 764 residues long: Subtilisin-like protease SBT3.1 (764 aa).

Residues 1-32 form the signal peptide; the sequence is MIQTLKTDSSFRLCFAAIAFGFVFIMNGKLSS. Positions 33 to 120 are cleaved as a propeptide — activation peptide; that stretch reads GTTPHEFPVY…LLENRKLGLQ (88 aa). In terms of domain architecture, Inhibitor I9 spans 41-116; that stretch reads VYIFYLGERK…EVIILLENRK (76 aa). Asn-76 carries N-linked (GlcNAc...) asparagine glycosylation. In terms of domain architecture, Peptidase S8 spans 124 to 610; that stretch reads TWDYLGQFST…GGLVNLEKAT (487 aa). Residue Asp-156 is the Charge relay system of the active site. An N-linked (GlcNAc...) asparagine glycan is attached at Asn-216. The active-site Charge relay system is His-230. 2 N-linked (GlcNAc...) asparagine glycosylation sites follow: Asn-245 and Asn-374. Ser-541 (charge relay system) is an active-site residue. N-linked (GlcNAc...) asparagine glycans are attached at residues Asn-674, Asn-711, and Asn-747.

The protein belongs to the peptidase S8 family.

The protein localises to the secreted. The polypeptide is Subtilisin-like protease SBT3.1 (Arabidopsis thaliana (Mouse-ear cress)).